The sequence spans 256 residues: DNA repair protein RecO (256 aa).

The protein belongs to the RecO family.

Its function is as follows. Involved in DNA repair and RecF pathway recombination. This Bartonella henselae (strain ATCC 49882 / DSM 28221 / CCUG 30454 / Houston 1) (Rochalimaea henselae) protein is DNA repair protein RecO.